The sequence spans 570 residues: Formate--tetrahydrofolate ligase (570 aa).

ATP is bound at residue 65 to 72; sequence TPFGEGKT.

Belongs to the formate--tetrahydrofolate ligase family.

It catalyses the reaction (6S)-5,6,7,8-tetrahydrofolate + formate + ATP = (6R)-10-formyltetrahydrofolate + ADP + phosphate. Its pathway is one-carbon metabolism; tetrahydrofolate interconversion. This Shewanella woodyi (strain ATCC 51908 / MS32) protein is Formate--tetrahydrofolate ligase.